The primary structure comprises 715 residues: Putative membrane protein IgaA homolog (715 aa).

5 helical membrane passes run 2–22 (STIVLILALLLTSLIAVGLLW), 214–234 (EACAICIALLLLFFALSGPTV), 235–255 (TLPWLVIVAVSLTCWACWYLF), 349–369 (NLTLIVGSLLVLVLLLIYVPL), and 663–683 (ATSLLLLVLIFCLVVNMVLLI).

The protein belongs to the IgaA family.

Its subcellular location is the cell inner membrane. This chain is Putative membrane protein IgaA homolog, found in Yersinia pestis.